A 438-amino-acid chain; its full sequence is MARFFQPKKKLQPESKHQQVLVEKLDHQGAGIAYLNKKPLFIDGTLPGEEVVTQLTESKSKFARGKLIKLLKPAAERVEPFCSHFNQCGGCDMQHMDYQAQLAYKQRTLLQLMKKFSGSEILLSPPVTGLEKAYRRRARVSLMWDKKSRQLQFGFRRKQSKQIENVTQCPVLVAELECLLPELKAILSHFQHPEHLGHVELVAADNGAVITLRHTGPLLDEDVAKLRQCAEQHQATLYLMPASDQLERISGEAPYYQEIGFKVPFEPNNFIQVNQKVNQQMVVQALEWLDPQSSDRVLDLFCGLGNFSLPIASKAKSVTGVEGVDEMVQKAAINASLNQINNAQFFHANLEQDFVGQPWASEKFDKILLDPARAGASGIIEQVSALGAKRVVYVSCNPATLARDSQSLLEQGYRLTKLGMLDMFPYTSHLESMALFEK.

In terms of domain architecture, TRAM spans 11-69 (LQPESKHQQVLVEKLDHQGAGIAYLNKKPLFIDGTLPGEEVVTQLTESKSKFARGKLIK). The [4Fe-4S] cluster site is built by Cys-82, Cys-88, Cys-91, and Cys-169. S-adenosyl-L-methionine-binding residues include Gln-272, Phe-301, Asn-306, Glu-322, Asn-349, and Asp-370. Cys-396 (nucleophile) is an active-site residue.

The protein belongs to the class I-like SAM-binding methyltransferase superfamily. RNA M5U methyltransferase family. RlmD subfamily.

The enzyme catalyses uridine(1939) in 23S rRNA + S-adenosyl-L-methionine = 5-methyluridine(1939) in 23S rRNA + S-adenosyl-L-homocysteine + H(+). Its function is as follows. Catalyzes the formation of 5-methyl-uridine at position 1939 (m5U1939) in 23S rRNA. The chain is 23S rRNA (uracil(1939)-C(5))-methyltransferase RlmD from Vibrio vulnificus (strain CMCP6).